The chain runs to 319 residues: tRNA uridine(34) hydroxylase (319 aa).

The region spanning 127 to 221 (KQEDTVIIDA…YGKDPEVQGE (95 aa)) is the Rhodanese domain. Cys-181 functions as the Cysteine persulfide intermediate in the catalytic mechanism.

This sequence belongs to the TrhO family.

The catalysed reaction is uridine(34) in tRNA + AH2 + O2 = 5-hydroxyuridine(34) in tRNA + A + H2O. Catalyzes oxygen-dependent 5-hydroxyuridine (ho5U) modification at position 34 in tRNAs. The protein is tRNA uridine(34) hydroxylase of Bacillus mycoides (strain KBAB4) (Bacillus weihenstephanensis).